The following is a 449-amino-acid chain: MFTVAIIGRPNVGKSSLFNRLIQKPYAIISDTPNTTRDRIYGVGEWLTRQIAFIDTGGLISQKTPLQQQIEVQVRAALSQANAIIFLVSYQEQISSDDFYVAKVLKKIKDKPILLVVNKSENLKPDAYEPNLQQFYSFGFGQPVCVSASHGIGIGNLMDRLVKDNQLPPYHGSSETNPEVRFCVIGKPNVGKSSLINQLVQQNRVLVSDESGTTRDAIDIPLRVNGQNYLLIDTAGIRRKGKIAPGIEAASYGKTQLAIARSNIILLMVDGSKPLSEQDEIIGGLAQAALIPVIILVNKWDLVQKDSNTMAKFKKQLQSQFQHLSFAPIVFISVKNNKRLHTIFEQLQIIQEQLTKKISTSLLNDVIQQAQLFNQAPLFKGGRLQVTYAVQTHSQTPHFVLFCNDPKFVHFSYARFLENKIRESFGFSAVPITLYFKSKNARIRGVAKT.

EngA-type G domains follow at residues 2–169 (FTVA…QLPP) and 180–355 (VRFC…EQLT). GTP-binding positions include 8-15 (GRPNVGKS), 55-59 (DTGGL), 118-121 (NKSE), 186-193 (GKPNVGKS), 233-237 (DTAGI), and 298-301 (NKWD). A KH-like domain is found at 356 to 440 (KKISTSLLND…PITLYFKSKN (85 aa)).

The protein belongs to the TRAFAC class TrmE-Era-EngA-EngB-Septin-like GTPase superfamily. EngA (Der) GTPase family. In terms of assembly, associates with the 50S ribosomal subunit.

Functionally, GTPase that plays an essential role in the late steps of ribosome biogenesis. The sequence is that of GTPase Der from Mycoplasma pneumoniae (strain ATCC 29342 / M129 / Subtype 1) (Mycoplasmoides pneumoniae).